A 107-amino-acid chain; its full sequence is Nucleoid-associated protein XF_1808 (107 aa).

The protein belongs to the YbaB/EbfC family. In terms of assembly, homodimer.

It localises to the cytoplasm. Its subcellular location is the nucleoid. Functionally, binds to DNA and alters its conformation. May be involved in regulation of gene expression, nucleoid organization and DNA protection. The sequence is that of Nucleoid-associated protein XF_1808 from Xylella fastidiosa (strain 9a5c).